A 479-amino-acid polypeptide reads, in one-letter code: Aspartyl/glutamyl-tRNA(Asn/Gln) amidotransferase subunit B (479 aa).

This sequence belongs to the GatB/GatE family. GatB subfamily. In terms of assembly, heterotrimer of A, B and C subunits.

It catalyses the reaction L-glutamyl-tRNA(Gln) + L-glutamine + ATP + H2O = L-glutaminyl-tRNA(Gln) + L-glutamate + ADP + phosphate + H(+). The catalysed reaction is L-aspartyl-tRNA(Asn) + L-glutamine + ATP + H2O = L-asparaginyl-tRNA(Asn) + L-glutamate + ADP + phosphate + 2 H(+). Allows the formation of correctly charged Asn-tRNA(Asn) or Gln-tRNA(Gln) through the transamidation of misacylated Asp-tRNA(Asn) or Glu-tRNA(Gln) in organisms which lack either or both of asparaginyl-tRNA or glutaminyl-tRNA synthetases. The reaction takes place in the presence of glutamine and ATP through an activated phospho-Asp-tRNA(Asn) or phospho-Glu-tRNA(Gln). This chain is Aspartyl/glutamyl-tRNA(Asn/Gln) amidotransferase subunit B, found in Streptococcus suis (strain 98HAH33).